A 359-amino-acid polypeptide reads, in one-letter code: Alanine racemase, biosynthetic (359 aa).

Lysine 34 serves as the catalytic Proton acceptor; specific for D-alanine. At lysine 34 the chain carries N6-(pyridoxal phosphate)lysine. Arginine 129 provides a ligand contact to substrate. Residue tyrosine 255 is the Proton acceptor; specific for L-alanine of the active site. Residue methionine 303 coordinates substrate.

The protein belongs to the alanine racemase family. Monomer but homodimer in the presence of the substrate. Pyridoxal 5'-phosphate serves as cofactor.

The catalysed reaction is L-alanine = D-alanine. It functions in the pathway amino-acid biosynthesis; D-alanine biosynthesis; D-alanine from L-alanine: step 1/1. Its pathway is cell wall biogenesis; peptidoglycan biosynthesis. Catalyzes the interconversion of L-alanine and D-alanine. In Shigella dysenteriae, this protein is Alanine racemase, biosynthetic (alr).